Consider the following 492-residue polypeptide: Putative sucrose transport protein SUC6 (492 aa).

A disordered region spans residues 1–26 (MSDLQANKDAAAVNRQSSSSSADLNG). Topologically, residues 1–33 (MSDLQANKDAAAVNRQSSSSSADLNGPSPMRKM) are cytoplasmic. Over residues 14 to 23 (NRQSSSSSAD) the composition is skewed to polar residues. Position 17 is a phosphoserine (serine 17). The helical transmembrane segment at 34–54 (ISVASIAAGIQFGWALQLSLL) threads the bilayer. Topologically, residues 55-68 (TPYVQLLGVPHKWS) are extracellular. The helical transmembrane segment at 69 to 89 (SFIWLCGPVSGLLVQPSVGYF) threads the bilayer. The Cytoplasmic segment spans residues 90–101 (SDRCKSRFGRRR). The helical transmembrane segment at 102–122 (PFIAMGALLVAVAVVLIGYAA) threads the bilayer. The Extracellular portion of the chain corresponds to 123–139 (DFGHSMGDKVDEPVKMR). The helical transmembrane segment at 140–160 (AVVIFALGFWILDVANNTLQG) threads the bilayer. Topologically, residues 161–181 (PCRAFLGDLAAGDAKKTRTAN) are cytoplasmic. The chain crosses the membrane as a helical span at residues 182 to 202 (AFFSFFMAVGNVLGYAAGSYT). The Extracellular segment spans residues 203-224 (NLYKIFPFTMTKACDIYCANLK). A helical membrane pass occupies residues 225–245 (SCFFLSITLLLVVTIIALWYV). At 246 to 277 (EDKQWSPKADSDNEKTPFFGEIFGAFKVMKRP) the chain is on the cytoplasmic side. A helical membrane pass occupies residues 278–298 (MWMLLIVTALNWIAWFPFLLY). The Extracellular segment spans residues 299–324 (DTDWMGREVYGGDSKGDDKMKKLYNQ). The chain crosses the membrane as a helical span at residues 325 to 345 (GIHVGGLGLMLNSIVLGFMSL). At 346 to 359 (GIEGISRKMGGAKR) the chain is on the cytoplasmic side. The helical transmembrane segment at 360–380 (LWGAVNIILAVCLAMTVLVTK) threads the bilayer. Over 381 to 403 (KAEEHRRIAGPMALPTDGIRAGA) the chain is Extracellular. Residues 404–424 (LTLFALLGIPLAITFSIPFAL) form a helical membrane-spanning segment. Over 425–446 (ASIISSSSGAGQGLSLGVLNMT) the chain is Cytoplasmic. Residues 447–467 (IVIPQMVVSFGVGPIDALFGG) traverse the membrane as a helical segment. Over 468–469 (GN) the chain is Extracellular. Residues 470–490 (LPGFVVGAIAAAISSVVAFSV) form a helical membrane-spanning segment. Over 491–492 (LP) the chain is Cytoplasmic.

This sequence belongs to the glycoside-pentoside-hexuronide (GPH) cation symporter transporter (TC 2.A.2.4) family.

The protein resides in the cell membrane. It functions in the pathway glycan biosynthesis; sucrose metabolism. May be responsible for the transport of glucosides into the cell, with the concomitant uptake of protons (symport system). Does not seem to transport sucrose. This is Putative sucrose transport protein SUC6 from Arabidopsis thaliana (Mouse-ear cress).